The following is a 523-amino-acid chain: Maintenance of mitochondrial morphology protein 1 (523 aa).

Residues 1–43 are Lumenal-facing; it reads MAGSTSASLQTPYFPSSTQINPVRVDHTLPLPPAQPSLSFTQG. A helical membrane pass occupies residues 44–64; it reads LLVGQLSVVLLIGAFIKFFIF. At 65–523 the chain is on the cytoplasmic side; it reads GEAPPPPSRG…GSMPDTVTET (459 aa). 4 disordered regions span residues 70–118, 295–349, 420–473, and 492–523; these read PPSR…SSST, TSDQ…SKHG, RTGL…IDRG, and GGHQ…VTET. Composition is skewed to polar residues over residues 74–96, 105–118, and 295–312; these read GLSN…TDSS, STSN…SSST, and TSDQ…TTSE. An SMP-LTD domain is found at 151–412; the sequence is QPESLDWFNV…EPRVQVVGLP (262 aa). The span at 449 to 467 shows a compositional bias: gly residues; that stretch reads GVSGGGGSGGGSGGGGGSM.

Belongs to the MMM1 family. In terms of assembly, homodimer. Component of the ER-mitochondria encounter structure (ERMES) or MDM complex, composed of MMM1, MDM10, MDM12 and MDM34. An MMM1 homodimer associates with one molecule of MDM12 on each side in a pairwise head-to-tail manner, and the SMP-LTD domains of MMM1 and MDM12 generate a continuous hydrophobic tunnel for phospholipid trafficking.

The protein localises to the endoplasmic reticulum membrane. In terms of biological role, component of the ERMES/MDM complex, which serves as a molecular tether to connect the endoplasmic reticulum (ER) and mitochondria. Components of this complex are involved in the control of mitochondrial shape and protein biogenesis, and function in nonvesicular lipid trafficking between the ER and mitochondria. The MDM12-MMM1 subcomplex functions in the major beta-barrel assembly pathway that is responsible for biogenesis of all outer membrane beta-barrel proteins, and acts in a late step after the SAM complex. The MDM10-MDM12-MMM1 subcomplex further acts in the TOM40-specific pathway after the action of the MDM12-MMM1 complex. Essential for establishing and maintaining the structure of mitochondria and maintenance of mtDNA nucleoids. The protein is Maintenance of mitochondrial morphology protein 1 of Paracoccidioides brasiliensis (strain Pb03).